Here is a 285-residue protein sequence, read N- to C-terminus: 2-dehydro-3-deoxyphosphooctonate aldolase (285 aa).

This sequence belongs to the KdsA family.

Its subcellular location is the cytoplasm. It carries out the reaction D-arabinose 5-phosphate + phosphoenolpyruvate + H2O = 3-deoxy-alpha-D-manno-2-octulosonate-8-phosphate + phosphate. The protein operates within carbohydrate biosynthesis; 3-deoxy-D-manno-octulosonate biosynthesis; 3-deoxy-D-manno-octulosonate from D-ribulose 5-phosphate: step 2/3. Its pathway is bacterial outer membrane biogenesis; lipopolysaccharide biosynthesis. This Paracidovorax citrulli (strain AAC00-1) (Acidovorax citrulli) protein is 2-dehydro-3-deoxyphosphooctonate aldolase.